Here is a 731-residue protein sequence, read N- to C-terminus: EF-hand calcium-binding domain-containing protein 4B (731 aa).

The interval 1–45 (MAAPDGRVVSRPQRLGQGSGQGPKGSGACLHPLDSLEQKETQEQT) is disordered. Positions 84–119 (LSLEELEDVFDALDADGNGYLTPQEFTTGFSHFFFS) constitute an EF-hand domain. Ca(2+)-binding residues include aspartate 97, aspartate 99, asparagine 101, tyrosine 103, and glutamate 108. Residues 201–382 (LTRIISQLQE…RERNKHLRDE (182 aa)) are a coiled coil. Residues 349–540 (MEVYRVTESL…ALCKEESSPS (192 aa)) are proline-rich domain (PRD) which mediates interaction with VAV1. Disordered stretches follow at residues 426 to 466 (SEEE…PYPR) and 494 to 528 (CSEEEEVSDQGVQGQIPEAPPLKLTPTSPRGQPVG). 9 residues coordinate GTP: serine 554, valine 556, glycine 557, lysine 558, threonine 559, serine 560, serine 571, proline 572, and threonine 577. Threonine 559 contributes to the Mg(2+) binding site. The segment at 572–580 (PGMAATVGI) is switch-I. The Mg(2+) site is built by threonine 577 and aspartate 600. Residues glycine 603, asparagine 658, lysine 659, aspartate 661, and alanine 689 each contribute to the GTP site. Residues 603–619 (GQERYRCITQQFFRKAD) are switch-II. The S-geranylgeranyl cysteine moiety is linked to residue cysteine 729.

Belongs to the EFCAB4 family. In terms of assembly, interacts with ORAI1 and STIM1; the interaction is direct and takes place in absence of Ca(2+). Forms a complex with ORAI1 and STIM1 at low concentration of Ca(2+), the complex dissociates at elevated Ca(2+) concentrations. Interacts with ORAI2 and ORAI3. As to quaternary structure, interacts with DYNC1H1. Interacts with the dynein-dynactin complex in a Ca(2+)-dependent manner. Interacts with VAV1. Mg(2+) serves as cofactor. In terms of tissue distribution, expressed in the Jurkat T-cell line. Expressed in endothelial cells. Expressed in Weibel-Palade bodies (which are P-selectin/SELP negative) in endothelial cells. Expressed in the Jurkat T-cell line.

The protein resides in the cytoplasm. It is found in the cytoskeleton. It localises to the microtubule organizing center. Its subcellular location is the cell membrane. The protein localises to the golgi apparatus membrane. The protein resides in the golgi apparatus. It is found in the trans-Golgi network membrane. It localises to the vesicle. It carries out the reaction GTP + H2O = GDP + phosphate + H(+). Its function is as follows. Ca(2+)-binding protein that plays a key role in store-operated Ca(2+) entry (SOCE) in T-cells by regulating CRAC channel activation. Acts as a cytoplasmic calcium-sensor that facilitates the clustering of ORAI1 and STIM1 at the junctional regions between the plasma membrane and the endoplasmic reticulum upon low Ca(2+) concentration. It thereby regulates CRAC channel activation, including translocation and clustering of ORAI1 and STIM1. Upon increase of cytoplasmic Ca(2+) resulting from opening of CRAC channels, dissociates from ORAI1 and STIM1, thereby destabilizing the ORAI1-STIM1 complex. In terms of biological role, rab GTPase that mediates the trafficking of Weibel-Palade bodies (WPBs) to microtubule organizing center (MTOC) in endothelial cells in response to acute inflammatory stimuli. During histamine (but not thrombin) stimulation of endothelial cells, the dynein-bound form induces retrograde transport of a subset of WPBs along microtubules to the MTOC in a Ca(2+)-independent manner and its GTPase activity is essential for this function. Ca(2+)-regulated dynein adapter protein that activates dynein-mediated transport and dynein-dynactin motility on microtubules and regulates endosomal trafficking of CD47. Acts as an intracellular signaling module bridging two important T-cell receptor (TCR) signaling pathways, Ca(2+)-NFAT and JNK, to affect T-cell activation. In resting T-cells, is predominantly localized near TGN network in a GTP-bound form, upon TCR stimulation, localizes at the immunological synapse via interaction with VAV1 to activate downstream Ca(2+)-NFAT and JNK signaling pathways. Plays a role in T-helper 1 (Th1) cell differentiation and T-helper 17 (Th17) cell effector function. Plays a role in store-operated Ca(2+) entry (SOCE) in T-cells by regulating CRAC channel activation. This chain is EF-hand calcium-binding domain-containing protein 4B, found in Homo sapiens (Human).